Consider the following 99-residue polypeptide: MVRKLSEEEVKRELENLEGWEFCKDYIQKEFSTKNWKTTIFVVNAIASLAEAQWHHPDLEVSFKKVKVKLTTHEAGGITERDIKLAKSIDELVKEILKH.

It belongs to the pterin-4-alpha-carbinolamine dehydratase family.

It carries out the reaction (4aS,6R)-4a-hydroxy-L-erythro-5,6,7,8-tetrahydrobiopterin = (6R)-L-erythro-6,7-dihydrobiopterin + H2O. The polypeptide is Putative pterin-4-alpha-carbinolamine dehydratase (Aquifex aeolicus (strain VF5)).